The following is a 255-amino-acid chain: 5'-nucleotidase SurE (255 aa).

Residues Asp8, Asp9, Ser40, and Asn93 each contribute to the a divalent metal cation site.

The protein belongs to the SurE nucleotidase family. It depends on a divalent metal cation as a cofactor.

It is found in the cytoplasm. It carries out the reaction a ribonucleoside 5'-phosphate + H2O = a ribonucleoside + phosphate. Its function is as follows. Nucleotidase that shows phosphatase activity on nucleoside 5'-monophosphates. This chain is 5'-nucleotidase SurE, found in Rhodopseudomonas palustris (strain BisB18).